Consider the following 132-residue polypeptide: Small ribosomal subunit protein uS8 (132 aa).

The protein belongs to the universal ribosomal protein uS8 family. In terms of assembly, part of the 30S ribosomal subunit. Contacts proteins S5 and S12.

In terms of biological role, one of the primary rRNA binding proteins, it binds directly to 16S rRNA central domain where it helps coordinate assembly of the platform of the 30S subunit. The chain is Small ribosomal subunit protein uS8 from Lactobacillus johnsonii (strain CNCM I-12250 / La1 / NCC 533).